The primary structure comprises 395 residues: S-adenosylmethionine synthase (395 aa).

His16 is an ATP binding site. Residue Asp18 participates in Mg(2+) binding. Residue Glu44 participates in K(+) binding. L-methionine-binding residues include Glu57 and Gln100. A flexible loop region spans residues 100 to 110 (QSPDIAQGVDR). ATP-binding positions include 167–169 (DAK), 233–234 (RF), Asp242, 248–249 (RK), Ala265, and Lys269. Asp242 serves as a coordination point for L-methionine. Residue Lys273 participates in L-methionine binding.

This sequence belongs to the AdoMet synthase family. As to quaternary structure, homotetramer; dimer of dimers. It depends on Mg(2+) as a cofactor. Requires K(+) as cofactor.

The protein localises to the cytoplasm. It catalyses the reaction L-methionine + ATP + H2O = S-adenosyl-L-methionine + phosphate + diphosphate. It participates in amino-acid biosynthesis; S-adenosyl-L-methionine biosynthesis; S-adenosyl-L-methionine from L-methionine: step 1/1. In terms of biological role, catalyzes the formation of S-adenosylmethionine (AdoMet) from methionine and ATP. The overall synthetic reaction is composed of two sequential steps, AdoMet formation and the subsequent tripolyphosphate hydrolysis which occurs prior to release of AdoMet from the enzyme. This chain is S-adenosylmethionine synthase, found in Burkholderia lata (strain ATCC 17760 / DSM 23089 / LMG 22485 / NCIMB 9086 / R18194 / 383).